A 680-amino-acid chain; its full sequence is DNA-directed RNA polymerase subunit beta' (680 aa).

Zn(2+)-binding residues include C69, C71, C87, and C90. D489, D491, and D493 together coordinate Mg(2+).

This sequence belongs to the RNA polymerase beta' chain family. RpoC1 subfamily. In terms of assembly, in plastids the minimal PEP RNA polymerase catalytic core is composed of four subunits: alpha, beta, beta', and beta''. When a (nuclear-encoded) sigma factor is associated with the core the holoenzyme is formed, which can initiate transcription. The cofactor is Mg(2+). Zn(2+) serves as cofactor.

Its subcellular location is the plastid. It localises to the chloroplast. The enzyme catalyses RNA(n) + a ribonucleoside 5'-triphosphate = RNA(n+1) + diphosphate. Its function is as follows. DNA-dependent RNA polymerase catalyzes the transcription of DNA into RNA using the four ribonucleoside triphosphates as substrates. The protein is DNA-directed RNA polymerase subunit beta' of Ranunculus macranthus (Large buttercup).